A 308-amino-acid chain; its full sequence is Olfactory receptor 5H19 (308 aa).

The Extracellular portion of the chain corresponds to 1–27; it reads MEKNATLLTEFVLTGLSHQPLWNIPLF. Asparagine 4 is a glycosylation site (N-linked (GlcNAc...) asparagine). The chain crosses the membrane as a helical span at residues 28-48; it reads LVFLVIYLITIVGNVSLITLI. The Cytoplasmic segment spans residues 49 to 55; the sequence is WTDPHLH. A helical transmembrane segment spans residues 56-76; sequence IPMYLFLGSLAFVDTSISSIV. Residues 77 to 92 lie on the Extracellular side of the membrane; it reads VPKMLLNFFGKSKVIT. The chain crosses the membrane as a helical span at residues 93–113; sequence LSECMAQFFLFNISATTECFL. A disulfide bond links cysteine 96 and cysteine 188. At 114-143 the chain is on the cytoplasmic side; it reads LAAMAYDRYVAICKPLLYPVVMTNGLCVWL. The chain crosses the membrane as a helical span at residues 144–164; sequence IALSFVAGIIHALIHEGFLLR. The Extracellular portion of the chain corresponds to 165-197; it reads LTFCNSNMIHNFYCDIISLLKISCTDTSLNYLI. The chain crosses the membrane as a helical span at residues 198–218; the sequence is VFIFSGSIQVFTISTILVSYT. Topologically, residues 219 to 238 are cytoplasmic; it reads IILFTILKKKSAKGIKKAFS. The chain crosses the membrane as a helical span at residues 239 to 259; the sequence is TCGAHLLSVSLYYGPLLFMYV. The Extracellular segment spans residues 260-270; sequence HPASSEVDDQD. A helical transmembrane segment spans residues 271–291; that stretch reads MIDSLFYTVIIPVLNPIIYSL. Over 292-308 the chain is Cytoplasmic; it reads RNKQVIDSLAKFLKRNV.

The protein belongs to the G-protein coupled receptor 1 family.

The protein localises to the cell membrane. Potential odorant receptor. The protein is Olfactory receptor 5H19 of Mus musculus (Mouse).